The primary structure comprises 470 residues: Chromosomal replication initiator protein DnaA (470 aa).

The domain I, interacts with DnaA modulators stretch occupies residues 1 to 68 (MENFWSLCLG…SALAEEVLST (68 aa)). Residues 68-133 (TPVQIELALY…KKPKTLTETS (66 aa)) form a domain II region. Residues 134–350 (GLNPAFRFDN…GALNRIIAMA (217 aa)) are domain III, AAA+ region. The ATP site is built by G178, G180, K181, and T182. Positions 351 to 470 (NFTGHAIDVS…IAVLIQVIRD (120 aa)) are domain IV, binds dsDNA.

Belongs to the DnaA family. In terms of assembly, oligomerizes as a right-handed, spiral filament on DNA at oriC.

It is found in the cytoplasm. Functionally, plays an essential role in the initiation and regulation of chromosomal replication. ATP-DnaA binds to the origin of replication (oriC) to initiate formation of the DNA replication initiation complex once per cell cycle. Binds the DnaA box (a 9 base pair repeat at the origin) and separates the double-stranded (ds)DNA. Forms a right-handed helical filament on oriC DNA; dsDNA binds to the exterior of the filament while single-stranded (ss)DNA is stabiized in the filament's interior. The ATP-DnaA-oriC complex binds and stabilizes one strand of the AT-rich DNA unwinding element (DUE), permitting loading of DNA polymerase. After initiation quickly degrades to an ADP-DnaA complex that is not apt for DNA replication. Binds acidic phospholipids. In Methylobacillus flagellatus (strain ATCC 51484 / DSM 6875 / VKM B-1610 / KT), this protein is Chromosomal replication initiator protein DnaA.